The primary structure comprises 1376 residues: DNA-directed RNA polymerase subunit beta (1376 aa).

The protein belongs to the RNA polymerase beta chain family. As to quaternary structure, the RNAP catalytic core consists of 2 alpha, 1 beta, 1 beta' and 1 omega subunit. When a sigma factor is associated with the core the holoenzyme is formed, which can initiate transcription.

The enzyme catalyses RNA(n) + a ribonucleoside 5'-triphosphate = RNA(n+1) + diphosphate. In terms of biological role, DNA-dependent RNA polymerase catalyzes the transcription of DNA into RNA using the four ribonucleoside triphosphates as substrates. This is DNA-directed RNA polymerase subunit beta from Methylorubrum extorquens (strain PA1) (Methylobacterium extorquens).